We begin with the raw amino-acid sequence, 669 residues long: L-type lectin-domain containing receptor kinase V.9 (669 aa).

The N-terminal stretch at 1 to 21 (MKFFVLVLLLVLQFFSNKALS) is a signal peptide. Residues 22-286 (QSEEGEFGFN…RDSRSTSVKK (265 aa)) lie on the Extracellular side of the membrane. Residues 38 to 259 (SGIAITNSKG…SHYILGWTFK (222 aa)) are legume-lectin like. Residues N53, N75, N124, N206, and N261 are each glycosylated (N-linked (GlcNAc...) asparagine). A helical membrane pass occupies residues 287–307 (ILAISLSLTSLAILVFLTISY). Topologically, residues 308-669 (MLFLKRKKLM…FTEPFVSHGR (362 aa)) are cytoplasmic. In terms of domain architecture, Protein kinase spans 344-603 (FRNSELLGKG…LGLFCSHPVA (260 aa)). ATP-binding positions include 350–358 (LGKGGFGKV) and K373. D469 (proton acceptor) is an active-site residue.

The protein in the C-terminal section; belongs to the protein kinase superfamily. Ser/Thr protein kinase family. In the N-terminal section; belongs to the leguminous lectin family.

Its subcellular location is the cell membrane. It carries out the reaction L-seryl-[protein] + ATP = O-phospho-L-seryl-[protein] + ADP + H(+). The catalysed reaction is L-threonyl-[protein] + ATP = O-phospho-L-threonyl-[protein] + ADP + H(+). This is L-type lectin-domain containing receptor kinase V.9 (LECRK59) from Arabidopsis thaliana (Mouse-ear cress).